We begin with the raw amino-acid sequence, 211 residues long: Ribonuclease HII (211 aa).

One can recognise an RNase H type-2 domain in the interval 17–211 (FLSAGVDEVG…CQPSLFEVRS (195 aa)). The a divalent metal cation site is built by Asp-23, Glu-24, and Asp-119.

It belongs to the RNase HII family. The cofactor is Mn(2+). Mg(2+) is required as a cofactor.

The protein localises to the cytoplasm. The enzyme catalyses Endonucleolytic cleavage to 5'-phosphomonoester.. Its function is as follows. Endonuclease that specifically degrades the RNA of RNA-DNA hybrids. The protein is Ribonuclease HII of Trichodesmium erythraeum (strain IMS101).